A 1063-amino-acid chain; its full sequence is Unconventional myosin-Ic (1063 aa).

The residue at position 1 (Met1) is an N-acetylmethionine. The Myosin motor domain occupies 47–731; sequence GVQDFVLLEN…TLFATEDALE (685 aa). ATP-binding positions include Asn88, Tyr96, 139 to 148, and 192 to 196; these read SGESGAGKTE and NDNSS. Lys383 is modified (N6-methyllysine). Position 408 is a phosphoserine (Ser408). The residue at position 486 (Lys486) is an N6-acetyllysine. Ser536 is subject to Phosphoserine. Positions 608-630 are actin-binding; it reads LLELVEILKSKEPAYVRCIKPND. 2 IQ domains span residues 734–757 and 758–786; these read RQSLATKIQATWRGFHCRQKFLRV and KRSAICIQSWWRGTLGRRKAAKRKWAAQT. Phosphoserine is present on residues Ser864 and Ser1041. A TH1 domain is found at 885-1059; that stretch reads KDNYPQSVPR…NGHLAVVAPR (175 aa).

The protein belongs to the TRAFAC class myosin-kinesin ATPase superfamily. Myosin family. In terms of assembly, interacts (via its IQ motifs) with CABP1 and CIB1; the interaction with CABP1 and CIB1 is calcium-dependent. Interacts (via tail domain) with PLEKHB1 (via PH domain); the interaction is not affected by the presence or absence of calcium and CALM. Interacts with POLR1A. Interacts with POLR2A. Component of the B-WICH complex, at least composed of SMARCA5/SNF2H, BAZ1B/WSTF, SF3B1, DEK, MYO1C, ERCC6, MYBBP1A and DDX21. Interacts (via its IQ motifs) with CALM; this precludes interaction with YWHAB. Interacts with YWHAB; this precludes interaction with CALM. Interacts with RPS6. Interacts with actin. Interacts with LLPH. Interacts with GLUT4. Interacts (via its IQ motifs) with SH3BGRL3; the interaction is dependent on calcium and takes place at membrane ruffles. Isoform 2 contains a N-acetylmethionine at position 1. As to expression, widely expressed.

The protein resides in the cytoplasm. The protein localises to the nucleus. It localises to the cell cortex. It is found in the cell projection. Its subcellular location is the ruffle membrane. The protein resides in the cytoplasmic vesicle. The protein localises to the stereocilium membrane. It localises to the nucleolus. It is found in the nucleoplasm. Myosins are actin-based motor molecules with ATPase activity. Unconventional myosins serve in intracellular movements. Their highly divergent tails are presumed to bind to membranous compartments, which would be moved relative to actin filaments. Involved in glucose transporter recycling in response to insulin by regulating movement of intracellular GLUT4-containing vesicles to the plasma membrane. Component of the hair cell's (the sensory cells of the inner ear) adaptation-motor complex. Acts as a mediator of adaptation of mechanoelectrical transduction in stereocilia of vestibular hair cells. Binds phosphoinositides and links the actin cytoskeleton to cellular membranes. In terms of biological role, isoform 3 is involved in regulation of transcription. Associated with transcriptional active ribosomal genes. Appears to cooperate with the WICH chromatin-remodeling complex to facilitate transcription. Necessary for the formation of the first phosphodiester bond during transcription initiation. This chain is Unconventional myosin-Ic (MYO1C), found in Bos taurus (Bovine).